Here is a 213-residue protein sequence, read N- to C-terminus: Orotidine 5'-phosphate decarboxylase (213 aa).

Substrate contacts are provided by residues Asp9, Lys31, 59-68 (DFKVADIPAT), Ser115, 166-176 (PGVGAQGGKIE), Gly191, and Arg192. Catalysis depends on Lys61, which acts as the Proton donor.

It belongs to the OMP decarboxylase family. Type 1 subfamily. Homodimer.

It catalyses the reaction orotidine 5'-phosphate + H(+) = UMP + CO2. It participates in pyrimidine metabolism; UMP biosynthesis via de novo pathway; UMP from orotate: step 2/2. Its function is as follows. Catalyzes the decarboxylation of orotidine 5'-monophosphate (OMP) to uridine 5'-monophosphate (UMP). The chain is Orotidine 5'-phosphate decarboxylase from Methanocaldococcus jannaschii (strain ATCC 43067 / DSM 2661 / JAL-1 / JCM 10045 / NBRC 100440) (Methanococcus jannaschii).